Here is a 509-residue protein sequence, read N- to C-terminus: MSIKTEEISSLIKKQLANYQDKVSVEETGTVTYVGDGVARADGLDNAMAGELLEFSNGVYGMAQNLESNDVGIVILGDYTGIREGDTVKRTGRIMEVPVGDALLGRVVDSLGRPIDGLGEIKTDKTRPIERKAPGVMERKSVSVPLQTGIKVIDALVPIGRGQRELIIGDRKTGKTAIALDTIINQKNQDVICIYVAIGQKESTVRASVETLRKYGALDYTIVVSASASNPAPMLYIAPYAGAAMGEEFMFNGKDVLIVYDDLSKQADAYRELSLILRRPPGREAYPGDIFYTHSRLLERAARLSDDLGGGSMTALPIIQTQAGDVSAYIPTNVISITDGQIFLDSDEFYAGQRPAIDAGTSVSRVGGDAQIKAMKKVAGTLRLDIASYNELASFAQFGSDLDAATQAKLARGQRTMEVLKQGLHDPLPVEEQVVTLFALSRGFIDKVEIEDVQRYESELAAYMHANHQDLYDTIKKTGKLPEGDDLQNAVAKFSETFQGTKKQVAEEK.

169-176 (GDRKTGKT) serves as a coordination point for ATP.

The protein belongs to the ATPase alpha/beta chains family. As to quaternary structure, F-type ATPases have 2 components, CF(1) - the catalytic core - and CF(0) - the membrane proton channel. CF(1) has five subunits: alpha(3), beta(3), gamma(1), delta(1), epsilon(1). CF(0) has three main subunits: a(1), b(2) and c(9-12). The alpha and beta chains form an alternating ring which encloses part of the gamma chain. CF(1) is attached to CF(0) by a central stalk formed by the gamma and epsilon chains, while a peripheral stalk is formed by the delta and b chains.

Its subcellular location is the cell membrane. The enzyme catalyses ATP + H2O + 4 H(+)(in) = ADP + phosphate + 5 H(+)(out). Its function is as follows. Produces ATP from ADP in the presence of a proton gradient across the membrane. The alpha chain is a regulatory subunit. This chain is ATP synthase subunit alpha, found in Limosilactobacillus reuteri (strain DSM 20016) (Lactobacillus reuteri).